A 391-amino-acid chain; its full sequence is MGDTFIRHIALLGFEKRFVPSQHYVRYMFLVKWQDLSEKVVYRRFTEIYEFHKTLKEMFPIEAGAINPENRIIPHLPAPKWFDGQRAAENHQGTLTEYCGTLMSLPTKISRCPHLLDFFKVRPDDLKLPTDNQTKKPETYLMPKDGKSTATDITGPIILQTYRAIANYEKTSGSEMALSTGDVVEVVEKSESGWWFCQMKAKRGWIPASFLEPLDSPDETEDPEPNYAGEPYVAIKAYTAVEGDEVSLLEGEAVEVIHKLLDGWWVIRKDDVTGYFPSMYLQKSGQDVSQAQRQIKRGAPPRRSSIRNVHSIHQRSRKRLSQDAYRRNSVRFLQQRRRQARPGPQSPGSPLEEERQTQRSKPQPAVPPRPSADLILNRCSESTKRKLASAV.

The PX domain maps to 1-126 (MGDTFIRHIA…DFFKVRPDDL (126 aa)). 2 SH3 domains span residues 157–216 (IILQ…PLDS) and 227–286 (YAGE…KSGQ). The disordered stretch occupies residues 286-391 (QDVSQAQRQI…STKRKLASAV (106 aa)). Residues Ser-304 and Ser-305 each carry the phosphoserine modification. Basic residues predominate over residues 310-319 (HSIHQRSRKR). Ser-321, Ser-329, Ser-346, and Ser-349 each carry phosphoserine.

It localises to the cytoplasm. In terms of biological role, may be required for activation of the latent NADPH oxidase (necessary for superoxide production). In Homo sapiens (Human), this protein is Putative neutrophil cytosol factor 1B (NCF1B).